The following is a 1259-amino-acid chain: Zinc finger protein BRUTUS-like At1g74770 (1259 aa).

Residues 441–461 (LLYTSIHVLPLGLLKCVILWF) form a helical membrane-spanning segment. Composition is skewed to basic and acidic residues over residues 904-916 (KEEKDLERSESKK) and 924-934 (EGDKEQTDKMS). The segment at 904 to 938 (KEEKDLERSESKKICRGSNQEGDKEQTDKMSQKVS) is disordered. The CHY-type zinc finger occupies 1018-1087 (PHSLIFGCNH…ANCSNTSCKS (70 aa)). Zn(2+) is bound by residues Cys1025, His1027, Cys1038, Cys1039, Cys1045, Cys1048, His1049, His1055, Cys1067, Cys1070, Cys1080, Cys1085, Cys1094, Cys1097, His1108, Cys1109, Cys1112, Cys1115, His1127, Cys1128, Cys1131, Cys1134, His1142, and Cys1144. A CTCHY-type zinc finger spans residues 1089–1152 (MGKYFCKICK…VCREKCLEDN (64 aa)). The RING-type; atypical zinc-finger motif lies at 1153–1195 (CPICHEYIFTSSSPVKALPCGHLMHSTCFQEYTCSHYTCPVCS).

As to quaternary structure, binds zinc and iron ions.

It is found in the membrane. The protein resides in the nucleus. Its pathway is protein modification; protein ubiquitination. Probable E3 ubiquitin-protein ligase that may regulate the response to iron deficiency and thus contributes to iron homeostasis. This chain is Zinc finger protein BRUTUS-like At1g74770, found in Arabidopsis thaliana (Mouse-ear cress).